Consider the following 270-residue polypeptide: Eukaryotic translation initiation factor 3 subunit G-1 (270 aa).

The region spanning 189-267 (AAIRISNLSE…LILSVEWSKP (79 aa)) is the RRM domain.

The protein belongs to the eIF-3 subunit G family. Component of the eukaryotic translation initiation factor 3 (eIF-3) complex. The eIF-3 complex interacts with pix.

The protein resides in the cytoplasm. Its function is as follows. RNA-binding component of the eukaryotic translation initiation factor 3 (eIF-3) complex, which is involved in protein synthesis of a specialized repertoire of mRNAs and, together with other initiation factors, stimulates binding of mRNA and methionyl-tRNAi to the 40S ribosome. The eIF-3 complex specifically targets and initiates translation of a subset of mRNAs involved in cell proliferation. This subunit can bind 18S rRNA. This is Eukaryotic translation initiation factor 3 subunit G-1 from Drosophila ananassae (Fruit fly).